The sequence spans 424 residues: Glucose-1-phosphate adenylyltransferase (424 aa).

Residues tyrosine 112, glycine 177, 192 to 193 (EK), and serine 210 contribute to the alpha-D-glucose 1-phosphate site.

This sequence belongs to the bacterial/plant glucose-1-phosphate adenylyltransferase family. As to quaternary structure, homotetramer.

The enzyme catalyses alpha-D-glucose 1-phosphate + ATP + H(+) = ADP-alpha-D-glucose + diphosphate. It participates in glycan biosynthesis; glycogen biosynthesis. In terms of biological role, involved in the biosynthesis of ADP-glucose, a building block required for the elongation reactions to produce glycogen. Catalyzes the reaction between ATP and alpha-D-glucose 1-phosphate (G1P) to produce pyrophosphate and ADP-Glc. This chain is Glucose-1-phosphate adenylyltransferase, found in Methylococcus capsulatus (strain ATCC 33009 / NCIMB 11132 / Bath).